The sequence spans 4912 residues: Probable E3 ubiquitin-protein ligase HERC2 (4912 aa).

Residues 1-67 (MFNRQASGGA…GSGSAAPPSH (67 aa)) are disordered. The span at 8 to 17 (GGAGSSGQGA) shows a compositional bias: gly residues. Over residues 18–31 (GSSQTASAAPVSAG) the composition is skewed to low complexity. 2 stretches are compositionally biased toward gly residues: residues 32–41 (VGVGGGGGAS) and 49–59 (SAAGSGSGSGS). RCC1 repeat units lie at residues 634 to 685 (NHNA…AITC), 686 to 739 (GGNL…ALTS), 741 to 789 (GLVF…ALSS), 791 to 843 (GQLY…ALSS), and 844 to 897 (SGEV…VWTQ). 3 disordered regions span residues 1102–1129 (RLSPTLGKQQEKEEEEREQQHQEPSTSP), 1428–1475 (QLLQ…PGRG), and 1659–1681 (QEQEKKPQSMPKQELEEQEEEET). Positions 1446–1458 (SHSCHSTAGNTPT) are enriched in polar residues. T1776 is subject to Phosphothreonine. Positions 1917–1990 (SGPDLAKLMK…QYDLQLADSA (74 aa)) constitute an MIB/HERC2 domain. Disordered stretches follow at residues 1994-2018 (ASPTEPEREDVSGSEASPTSDSHPS) and 2381-2412 (GSIYASPDEPDRSDAESQQPGEQDQQLSSGSG). A compositionally biased stretch (polar residues) spans 2396–2412 (ESQQPGEQDQQLSSGSG). The UBA domain occupies 2511 to 2557 (ATDAQLIGQIMEMGFTRRTVELALKQLSLQAEIMPTPEQIVQWILEH). Positions 2572–2620 (LASSASSHDPEADSDNECPSSNSTTSSSTSSDTVEGQPMAVSGPAPPVK) are disordered. Residues 2591 to 2604 (SSNSTTSSSTSSDT) show a composition bias toward low complexity. The CPH domain occupies 2624–2699 (RKDFQTADLY…VCFVHIELVE (76 aa)). The DOC domain occupies 2780–2958 (TSATLPSLGD…FLASEYSAGV (179 aa)). 7 RCC1 repeats span residues 2985 to 3036 (PCTV…IVSQ), 3037 to 3090 (DGKV…ALTL), 3091 to 3142 (DGKV…AISS), 3144 to 3194 (GELY…TLAL), 3197 to 3248 (DGAV…ALTR), 3250 to 3300 (GEVW…AVTD), and 3302 to 3352 (GQVY…AWGL). 2 disordered regions span residues 3352 to 3374 (LPNASSDEEKRGPVPFSSTRDPL) and 3953 to 4000 (LPSS…EQPD). Over residues 3974–3988 (LNSTTSLSSSTVSNV) the composition is skewed to low complexity. RCC1 repeat units follow at residues 4049 to 4099 (STIY…AVTP), 4101 to 4153 (GKLF…ALTT), 4155 to 4205 (GEVY…AITA), 4207 to 4259 (GHVL…CITD), 4261 to 4311 (DNVW…ALTK), 4313 to 4363 (GAVY…ACSD), and 4365 to 4415 (GEVY…ALST). In terms of domain architecture, HECT spans 4547-4882 (ALALPHRVWK…IHFCKSIDTD (336 aa)). C4850 functions as the Glycyl thioester intermediate in the catalytic mechanism. A disordered region spans residues 4891-4912 (EPTEATGSEDNSDLESVASHEG).

The protein localises to the cytoplasm. Its subcellular location is the cytoskeleton. It is found in the microtubule organizing center. The protein resides in the centrosome. It localises to the centriole. The enzyme catalyses S-ubiquitinyl-[E2 ubiquitin-conjugating enzyme]-L-cysteine + [acceptor protein]-L-lysine = [E2 ubiquitin-conjugating enzyme]-L-cysteine + N(6)-ubiquitinyl-[acceptor protein]-L-lysine.. It functions in the pathway protein modification; protein ubiquitination. In terms of biological role, probable E3 ubiquitin-protein ligase which accepts ubiquitin from an E2 ubiquitin-conjugating enzyme in the form of a thioester and then directly transfers the ubiquitin to targeted substrates. This is Probable E3 ubiquitin-protein ligase HERC2 (HERC2) from Drosophila melanogaster (Fruit fly).